We begin with the raw amino-acid sequence, 880 residues long: Alanine--tRNA ligase (880 aa).

4 residues coordinate Zn(2+): His566, His570, Cys668, and His672.

This sequence belongs to the class-II aminoacyl-tRNA synthetase family. Requires Zn(2+) as cofactor.

The protein localises to the cytoplasm. The catalysed reaction is tRNA(Ala) + L-alanine + ATP = L-alanyl-tRNA(Ala) + AMP + diphosphate. In terms of biological role, catalyzes the attachment of alanine to tRNA(Ala) in a two-step reaction: alanine is first activated by ATP to form Ala-AMP and then transferred to the acceptor end of tRNA(Ala). Also edits incorrectly charged Ser-tRNA(Ala) and Gly-tRNA(Ala) via its editing domain. The chain is Alanine--tRNA ligase from Acetivibrio thermocellus (strain ATCC 27405 / DSM 1237 / JCM 9322 / NBRC 103400 / NCIMB 10682 / NRRL B-4536 / VPI 7372) (Clostridium thermocellum).